Here is a 150-residue protein sequence, read N- to C-terminus: Protein adenylyltransferase MntA (150 aa).

Residues 32–46 carry the GSX(10)DXD motif motif; sequence GSRATGNINANSDWD. Active-site residues include D44 and D46. Positions 44, 46, and 86 each coordinate Mg(2+).

This sequence belongs to the MntA antitoxin family. Forms a complex with HepT, probably MntA(1):HepT(2) in vivo; can only be purified when both 'Arg-102' and 'Tyr-109' (or 'His-107' and 'Tyr-109') of HepThave been mutated. The fully di-AMPylated HepT homodimer is not found in a complex with MntA. Mg(2+) is required as a cofactor.

It carries out the reaction L-tyrosyl-[protein] + ATP = O-(5'-adenylyl)-L-tyrosyl-[protein] + diphosphate. The enzyme catalyses O-(5'-adenylyl)-L-tyrosyl-[protein] + ATP = O-[5'-(adenylyl-(5'-&gt;3')-adenylyl)]-L-tyrosyl-[protein] + diphosphate. In terms of biological role, antitoxin component of a type VII toxin-antitoxin (TA) system. Upon cloning in E.coli neutralizes the effect of cognate toxin HepT. Neutralization is mostly due to di-AMPylation of toxin by this enzyme. Successively di-AMPylates HepT on 'Tyr-109'. In vitro will use ATP, dATP, GTP, dGTP, TTP or UTP to generate a mono-modified protein, but requires a purine nucleotide for the second modification reaction (ATP, dATP or GTP). This Aphanizomenon flos-aquae (strain 2012/KM1/D3) protein is Protein adenylyltransferase MntA.